The primary structure comprises 347 residues: Ribosomal RNA large subunit methyltransferase M (347 aa).

S-adenosyl-L-methionine-binding positions include S184, 217–220 (APGG), D236, D256, and D272. The active-site Proton acceptor is K301.

Belongs to the class I-like SAM-binding methyltransferase superfamily. RNA methyltransferase RlmE family. RlmM subfamily. Monomer.

Its subcellular location is the cytoplasm. It catalyses the reaction cytidine(2498) in 23S rRNA + S-adenosyl-L-methionine = 2'-O-methylcytidine(2498) in 23S rRNA + S-adenosyl-L-homocysteine + H(+). In terms of biological role, catalyzes the 2'-O-methylation at nucleotide C2498 in 23S rRNA. This chain is Ribosomal RNA large subunit methyltransferase M, found in Xanthomonas campestris pv. campestris (strain 8004).